The following is a 277-amino-acid chain: Putative thiosulfate sulfurtransferase (277 aa).

Rhodanese domains follow at residues 18–125 and 154–274; these read HAPK…PLSS and AINV…APIE. The active-site Cysteine persulfide intermediate is C233. R238 serves as a coordination point for substrate.

It carries out the reaction thiosulfate + hydrogen cyanide = thiocyanate + sulfite + 2 H(+). Functionally, may be a sulfotransferase involved in the formation of thiosulfate. The chain is Putative thiosulfate sulfurtransferase (cysA1) from Mycobacterium tuberculosis (strain CDC 1551 / Oshkosh).